A 181-amino-acid chain; its full sequence is Large ribosomal subunit protein uL5 (181 aa).

Belongs to the universal ribosomal protein uL5 family. Part of the 50S ribosomal subunit; part of the 5S rRNA/L5/L18/L25 subcomplex. Contacts the 5S rRNA and the P site tRNA. Forms a bridge to the 30S subunit in the 70S ribosome.

This is one of the proteins that bind and probably mediate the attachment of the 5S RNA into the large ribosomal subunit, where it forms part of the central protuberance. In the 70S ribosome it contacts protein S13 of the 30S subunit (bridge B1b), connecting the 2 subunits; this bridge is implicated in subunit movement. Contacts the P site tRNA; the 5S rRNA and some of its associated proteins might help stabilize positioning of ribosome-bound tRNAs. The chain is Large ribosomal subunit protein uL5 from Mycoplasmopsis pulmonis (strain UAB CTIP) (Mycoplasma pulmonis).